The sequence spans 403 residues: NADH-quinone oxidoreductase subunit D (403 aa).

It belongs to the complex I 49 kDa subunit family. NDH-1 is composed of 15 different subunits. Subunits NuoB, C, D, E, F, and G constitute the peripheral sector of the complex.

It is found in the cell membrane. The catalysed reaction is a quinone + NADH + 5 H(+)(in) = a quinol + NAD(+) + 4 H(+)(out). Its function is as follows. NDH-1 shuttles electrons from NADH, via FMN and iron-sulfur (Fe-S) centers, to quinones in the respiratory chain. The immediate electron acceptor for the enzyme in this species is believed to be a menaquinone. Couples the redox reaction to proton translocation (for every two electrons transferred, four hydrogen ions are translocated across the cytoplasmic membrane), and thus conserves the redox energy in a proton gradient. This chain is NADH-quinone oxidoreductase subunit D, found in Deinococcus geothermalis (strain DSM 11300 / CIP 105573 / AG-3a).